The following is a 338-amino-acid chain: Photosystem II assembly lipoprotein Ycf48 (338 aa).

Residues 1–23 (MKRLFSNVINLTLVLIVGVALSG) form the signal peptide. A lipid anchor (N-palmitoyl cysteine) is attached at Cys24. Cys24 is lipidated: S-diacylglycerol cysteine.

The protein belongs to the Ycf48 family. As to quaternary structure, part of early PSII assembly complexes which includes D1 (psbA) and PsbI; not found in mature PSII. Binds to the lumenal side of PSII complexes. Interacts with YidC.

The protein localises to the cellular thylakoid membrane. A factor required for optimal assembly of photosystem II (PSII), acting in the early stages of PSII assembly. Also plays a role in replacement of photodamaged D1 (psbA). Assists YidC in synthesis of chlorophyll-binding proteins. This Prochlorococcus marinus (strain NATL2A) protein is Photosystem II assembly lipoprotein Ycf48.